The following is a 368-amino-acid chain: RNA polymerase sigma factor SigA (368 aa).

The tract at residues 16-90 (TLTLEDVKKQ…KLNPSDLSAP (75 aa)) is sigma-70 factor domain-1. The segment at 69–90 (LVNEKDSSDTDEKLNPSDLSAP) is disordered. A compositionally biased stretch (basic and acidic residues) spans 71–83 (NEKDSSDTDEKLN). A sigma-70 factor domain-2 region spans residues 135-205 (LAEANLRLVV…TRAIADQART (71 aa)). The Interaction with polymerase core subunit RpoC signature appears at 159 to 162 (DLIQ). Residues 214–291 (ETINKLIRVQ…QEAQSPSDHA (78 aa)) form a sigma-70 factor domain-3 region. A sigma-70 factor domain-4 region spans residues 303-356 (VLDTLTDREENVLRLRFGLDDGRTRTLEEVGKVFGVTRERIRQIEAKALRKLRH). Positions 329-348 (LEEVGKVFGVTRERIRQIEA) form a DNA-binding region, H-T-H motif.

It belongs to the sigma-70 factor family. RpoD/SigA subfamily. In terms of assembly, interacts transiently with the RNA polymerase catalytic core formed by RpoA, RpoB, RpoC and RpoZ (2 alpha, 1 beta, 1 beta' and 1 omega subunit) to form the RNA polymerase holoenzyme that can initiate transcription. Interacts (via sigma-70 factor domain 4) with the phage G1 protein gp67; this inhibits rRNA synthesis. Interaction with phage G1 protein gp67 does not inhibit transcription in general, but selectively inhibits transcription from promoters that require interaction of the RNA polymerase alpha subunit with DNA sequences upstream of the -35 promoter element.

The protein resides in the cytoplasm. Sigma factors are initiation factors that promote the attachment of RNA polymerase to specific initiation sites and are then released. This sigma factor is the primary sigma factor during exponential growth. The sequence is that of RNA polymerase sigma factor SigA from Staphylococcus aureus (strain NCTC 8325 / PS 47).